Reading from the N-terminus, the 356-residue chain is Chaperone protein DnaJ (356 aa).

The region spanning 5–69 (DYYQILGVSK…ERRKEYDRIL (65 aa)) is the J domain. Residues 121 to 197 (GCEKDIEYER…CSGRGRVAMH (77 aa)) form a CR-type zinc finger. Cysteine 134, cysteine 137, cysteine 151, cysteine 154, cysteine 171, cysteine 174, cysteine 185, and cysteine 188 together coordinate Zn(2+). CXXCXGXG motif repeat units follow at residues 134–141 (CPTCEGKG), 151–158 (CHACEGTG), 171–178 (CSVCKGRG), and 185–192 (CPACSGRG).

The protein belongs to the DnaJ family. In terms of assembly, homodimer. It depends on Zn(2+) as a cofactor.

It localises to the cytoplasm. Its function is as follows. Participates actively in the response to hyperosmotic and heat shock by preventing the aggregation of stress-denatured proteins and by disaggregating proteins, also in an autonomous, DnaK-independent fashion. Unfolded proteins bind initially to DnaJ; upon interaction with the DnaJ-bound protein, DnaK hydrolyzes its bound ATP, resulting in the formation of a stable complex. GrpE releases ADP from DnaK; ATP binding to DnaK triggers the release of the substrate protein, thus completing the reaction cycle. Several rounds of ATP-dependent interactions between DnaJ, DnaK and GrpE are required for fully efficient folding. Also involved, together with DnaK and GrpE, in the DNA replication of plasmids through activation of initiation proteins. In Hydrogenobacter thermophilus (strain DSM 6534 / IAM 12695 / TK-6), this protein is Chaperone protein DnaJ.